The chain runs to 293 residues: Putative ribose uptake protein RbsU (293 aa).

10 helical membrane-spanning segments follow: residues 5 to 24 (ALLI…TVAS), 34 to 51 (IIGA…LAVV), 58 to 80 (TGTN…IITF), 95 to 114 (TTAF…LGNW), 121 to 138 (IIGF…RMTV), 153 to 170 (RAVV…LYSA), 177 to 199 (IDGL…IYGF), 212 to 234 (ITWL…LISA), 241 to 263 (LATG…IYFL), and 273 to 292 (VITI…TVFI).

Belongs to the GRP transporter (TC 2.A.7.5) family.

The protein localises to the cell membrane. In terms of biological role, could be involved in the uptake of ribose. This is Putative ribose uptake protein RbsU (rbsU) from Staphylococcus aureus (strain COL).